The chain runs to 498 residues: Myotilin (498 aa).

Disordered stretches follow at residues 1-46 (MFNY…QPRQ), 64-151 (MSSS…HEIQ), and 202-241 (QDDS…NDQD). Position 20 is an omega-N-methylarginine (arginine 20). Residues 29-43 (SSFSSQTKQSSIIIQ) show a composition bias toward low complexity. A compositionally biased stretch (polar residues) spans 77–138 (AGSNPGQRVT…INAKPSQTAN (62 aa)). The tract at residues 79 to 150 (SNPGQRVTTT…PIPRTPDHEI (72 aa)) is necessary for interaction with ACTN1. Over residues 202 to 212 (QDDSGAQDSQQ) the composition is skewed to low complexity. The interval 215–493 (SEHARLQVPT…QRLAAQSGLY (279 aa)) is necessary for interaction with FLNC. The tract at residues 215–498 (SEHARLQVPT…QSGLYESEEL (284 aa)) is necessary for interaction with ACTA1. Polar residues predominate over residues 222–235 (VPTSQVRSRSTSRG). Ig-like C2-type domains lie at 250 to 335 (PRFI…ATFT) and 349 to 441 (PMFI…LDVT).

The protein belongs to the myotilin/palladin family. Homodimer. Interacts with ACTA1, ACTN1, FLNA, FLNB, FLNC and MYOZ2. Interacts with the C-terminal region of MYOZ1. Expressed in skeletal muscle (at protein level). Expressed in skeletal muscle, heart, bone marrow and thyroid gland.

The protein resides in the cell membrane. It is found in the sarcolemma. The protein localises to the cytoplasm. It localises to the cytoskeleton. Its subcellular location is the myofibril. The protein resides in the sarcomere. It is found in the z line. In terms of biological role, component of a complex of multiple actin cross-linking proteins. Involved in the control of myofibril assembly and stability at the Z lines in muscle cells. The chain is Myotilin (MYOT) from Homo sapiens (Human).